Consider the following 128-residue polypeptide: D-ribose pyranase (128 aa).

The active-site Proton donor is histidine 20. Residues aspartate 28, histidine 95, and 117–119 (YSN) contribute to the substrate site.

Belongs to the RbsD / FucU family. RbsD subfamily. Homodecamer.

Its subcellular location is the cytoplasm. The catalysed reaction is beta-D-ribopyranose = beta-D-ribofuranose. It participates in carbohydrate metabolism; D-ribose degradation; D-ribose 5-phosphate from beta-D-ribopyranose: step 1/2. Functionally, catalyzes the interconversion of beta-pyran and beta-furan forms of D-ribose. The polypeptide is D-ribose pyranase (Thermosipho africanus (strain TCF52B)).